The primary structure comprises 399 residues: Putative gustatory receptor 59e (399 aa).

Over 1-33 (MDSSYWENLLLTINRFLGVYPSGRVGVLRWLHT) the chain is Cytoplasmic. The helical transmembrane segment at 34–54 (LWSLFLLMYIWTGSIVKCLEF) threads the bilayer. Topologically, residues 55–65 (TVEIPTIEKLL) are extracellular. Residues 66–86 (YLMEFPGNMATIAILVYYAVL) form a helical membrane-spanning segment. The Cytoplasmic segment spans residues 87 to 120 (NRPLAHGAELQIERIITGLKGKAKRLVYKRHGQR). A helical membrane pass occupies residues 121-141 (TLHLMATTLVFHGLCVLVDVV). Over 142–206 (NYDFEFWTTW…RPPQGSTKLD (65 aa)) the chain is Extracellular. The chain crosses the membrane as a helical span at residues 207–227 (ACYESAFAVLVDAGGGSALMI). The Cytoplasmic portion of the chain corresponds to 228–250 (EEMRYTCNLIEQVHSQFLLRFGL). A helical transmembrane segment spans residues 251–271 (YLVLNLLNSLVSICVELYLIF). Topologically, residues 272 to 282 (NFFETPLWEES) are extracellular. A helical transmembrane segment spans residues 283-303 (VLLVYRLLWLAMHGGRIWFIL). Residues 304–361 (SVNEQILEQKCNLCQLLNELEVCSSRLQRTINRFLLQLQRSIDQPLEACGIVTLDTRS) are Cytoplasmic-facing. Residues 362–382 (LGGFIGVLMAIVIFLIQIGLG) form a helical membrane-spanning segment. Residues Asn-383 and Asn-392 are each glycosylated (N-linked (GlcNAc...) asparagine). Residues 383 to 399 (NKSLMGVALNRSNWVYV) lie on the Extracellular side of the membrane.

The protein belongs to the insect chemoreceptor superfamily. Gustatory receptor (GR) family. Gr10a subfamily. In terms of tissue distribution, expressed in the adult labellar chemosensory neurons. In larvae, is expressed in neurons of the terminal external chemosensory organ.

It localises to the cell membrane. Functionally, probable gustatory receptor which mediates acceptance or avoidance behavior, depending on its substrates. The chain is Putative gustatory receptor 59e (Gr59e) from Drosophila melanogaster (Fruit fly).